The primary structure comprises 324 residues: UDP-N-acetylenolpyruvoylglucosamine reductase (324 aa).

An FAD-binding PCMH-type domain is found at 38–231; the sequence is AGGSARRLYV…SRERIRSLLK (194 aa). The active site involves R195. The Proton donor role is filled by S246. E316 is a catalytic residue.

It belongs to the MurB family. FAD serves as cofactor.

The protein localises to the cytoplasm. It carries out the reaction UDP-N-acetyl-alpha-D-muramate + NADP(+) = UDP-N-acetyl-3-O-(1-carboxyvinyl)-alpha-D-glucosamine + NADPH + H(+). It participates in cell wall biogenesis; peptidoglycan biosynthesis. In terms of biological role, cell wall formation. The protein is UDP-N-acetylenolpyruvoylglucosamine reductase of Thiobacillus denitrificans (strain ATCC 25259 / T1).